A 643-amino-acid polypeptide reads, in one-letter code: Phosphatidylinositol-3,5-bisphosphate 3-phosphatase MTMR2 (643 aa).

2 stretches are compositionally biased toward polar residues: residues 1-12 (MEKSSSCESLGS) and 23-40 (DSLS…VHTK). The segment at 1–54 (MEKSSSCESLGSQPAVARPPSVDSLSSASTSHSENSVHTKSASVVSSDSISTSA) is disordered. Phosphoserine is present on residues Ser-6 and Ser-9. Positions 41–54 (SASVVSSDSISTSA) are enriched in low complexity. The residue at position 58 (Ser-58) is a Phosphoserine. Residues 68–139 (NKLAEMEEPP…GVISRVEKIG (72 aa)) form the GRAM domain. The region spanning 205–580 (GWKLYDSLSE…RHLELWVGYY (376 aa)) is the Myotubularin phosphatase domain. Asn-330, Asn-355, and Ile-356 together coordinate a 1,2-diacyl-sn-glycero-3-phospho-(1D-myo-inositol-3,5-bisphosphate). Asn-330, Asn-355, and Ile-356 together coordinate a 1,2-diacyl-sn-glycero-3-phospho-(1D-myo-inositol-3-phosphate). Cys-417 serves as the catalytic Phosphocysteine intermediate. Ser-418, Asp-419, Gly-420, Trp-421, Asp-422, Arg-423, Arg-459, and Arg-463 together coordinate a 1,2-diacyl-sn-glycero-3-phospho-(1D-myo-inositol-3,5-bisphosphate). A 1,2-diacyl-sn-glycero-3-phospho-(1D-myo-inositol-3-phosphate) contacts are provided by Ser-418, Asp-419, Gly-420, Trp-421, Asp-422, and Arg-423. Residue Arg-463 coordinates a 1,2-diacyl-sn-glycero-3-phospho-(1D-myo-inositol-3-phosphate). Residues 593–627 (IHNRYKELLAKRAELQKKVEELQREISNRSTSSSE) adopt a coiled-coil conformation. The disordered stretch occupies residues 614–643 (LQREISNRSTSSSERAGSPAQCVTPVQTVV).

It belongs to the protein-tyrosine phosphatase family. Non-receptor class myotubularin subfamily. As to quaternary structure, homodimer (via coiled-coil domain). Heterotetramer consisting of one MTMR2 dimer and one SBF2/MTMR13 dimer; specifically in peripheral nerves stabilizes SBF2/MTMR13 at the membranes and increases MTMR2 catalytic activity towards phosphatidylinositol 3,5-bisphosphate and to a lesser extent towards phosphatidylinositol 3-phosphate. Heterodimer with SBF1/MTMR5; acts as an adapter for the phosphatase MTMR2 to regulate MTMR2 catalytic activity and subcellular location. Heterodimer with MTMR12. Post-translationally, phosphorylation at Ser-58 decreases MTMR2 localization to endocytic vesicular structures.

The protein localises to the cytoplasm. It is found in the early endosome membrane. The protein resides in the perinuclear region. Its subcellular location is the cell projection. It localises to the axon. The protein localises to the endosome membrane. It carries out the reaction a 1,2-diacyl-sn-glycero-3-phospho-(1D-myo-inositol-3,5-bisphosphate) + H2O = a 1,2-diacyl-sn-glycero-3-phospho-(1D-myo-inositol-5-phosphate) + phosphate. The enzyme catalyses a 1,2-diacyl-sn-glycero-3-phospho-(1D-myo-inositol-3-phosphate) + H2O = a 1,2-diacyl-sn-glycero-3-phospho-(1D-myo-inositol) + phosphate. It catalyses the reaction 1,2-dioctanoyl-sn-glycero-3-phospho-(1-D-myo-inositol-3-phosphate) + H2O = 1,2-dioctanoyl-sn-glycero-3-phospho-(1D-myo-inositol) + phosphate. The catalysed reaction is 1,2-dioctanoyl-sn-glycero-3-phospho-(1D-myo-inositol-3,5-bisphosphate) + H2O = 1,2-dioctanoyl-sn-glycero-3-phospho-(1D-myo-inositol-5-phosphate) + phosphate. Its function is as follows. Lipid phosphatase that specifically dephosphorylates the D-3 position of phosphatidylinositol 3-phosphate and phosphatidylinositol 3,5-bisphosphate, generating phosphatidylinositol and phosphatidylinositol 5-phosphate. Regulates the level of these phosphoinositides critical for various biological processes including autophagy initiation and autophagosome maturation. In Bos taurus (Bovine), this protein is Phosphatidylinositol-3,5-bisphosphate 3-phosphatase MTMR2.